Consider the following 167-residue polypeptide: Endoribonuclease YbeY (167 aa).

His-131, His-135, and His-141 together coordinate Zn(2+).

It belongs to the endoribonuclease YbeY family. Zn(2+) is required as a cofactor.

The protein resides in the cytoplasm. Single strand-specific metallo-endoribonuclease involved in late-stage 70S ribosome quality control and in maturation of the 3' terminus of the 16S rRNA. This is Endoribonuclease YbeY from Rickettsia rickettsii (strain Iowa).